A 331-amino-acid polypeptide reads, in one-letter code: D-alanine--D-alanine ligase (331 aa).

The ATP-grasp domain occupies 116–316 (KRLWQTHSLP…YEDFVLQLAA (201 aa)). Position 142–197 (142–197 (ADRLGLPLIVKPAREGSSIGLTKVTSVAELPAAYEKAARLDRDVMAEQFIDGDELT)) interacts with ATP. Residues D269, E283, and N285 each coordinate Mg(2+).

Belongs to the D-alanine--D-alanine ligase family. Requires Mg(2+) as cofactor. The cofactor is Mn(2+).

The protein localises to the cytoplasm. The enzyme catalyses 2 D-alanine + ATP = D-alanyl-D-alanine + ADP + phosphate + H(+). It functions in the pathway cell wall biogenesis; peptidoglycan biosynthesis. In terms of biological role, cell wall formation. The chain is D-alanine--D-alanine ligase from Ralstonia nicotianae (strain ATCC BAA-1114 / GMI1000) (Ralstonia solanacearum).